Consider the following 4660-residue polypeptide: Low-density lipoprotein receptor-related protein 2 (4660 aa).

An N-terminal signal peptide occupies residues methionine 1–glycine 25. Residues glutamine 26–threonine 4425 lie on the Extracellular side of the membrane. LDL-receptor class A domains follow at residues glutamate 27–proline 63, serine 66–proline 104, threonine 107–tyrosine 143, threonine 146–threonine 180, leucine 182–asparagine 218, threonine 221–glutamate 257, and threonine 264–glycine 307. Disulfide bonds link cysteine 28/cysteine 40, cysteine 35/cysteine 53, cysteine 47/cysteine 62, cysteine 67/cysteine 80, cysteine 74/cysteine 93, cysteine 87/cysteine 103, cysteine 108/cysteine 120, cysteine 115/cysteine 133, cysteine 127/cysteine 142, cysteine 147/cysteine 157, cysteine 152/cysteine 170, cysteine 164/cysteine 179, cysteine 183/cysteine 195, cysteine 190/cysteine 208, cysteine 202/cysteine 217, cysteine 222/cysteine 234, cysteine 229/cysteine 247, cysteine 241/cysteine 256, cysteine 265/cysteine 278, cysteine 272/cysteine 291, and cysteine 285/cysteine 306. Asparagine 159 and asparagine 178 each carry an N-linked (GlcNAc...) asparagine glycan. 4 N-linked (GlcNAc...) asparagine glycosylation sites follow: asparagine 299, asparagine 340, asparagine 387, and asparagine 462. LDL-receptor class B repeat units follow at residues histidine 435–asparagine 477, asparagine 478–valine 520, glycine 521–serine 567, and lysine 568–histidine 612. An N-linked (GlcNAc...) asparagine glycan is attached at asparagine 657. LDL-receptor class B repeat units lie at residues serine 752–serine 794, arginine 795–alanine 836, glycine 837–threonine 880, and serine 881–asparagine 924. N-linked (GlcNAc...) asparagine glycosylation is present at asparagine 865. One can recognise an LDL-receptor class A 8 domain in the interval glutamine 1024–glycine 1060. 3 disulfides stabilise this stretch: cysteine 1025–cysteine 1037, cysteine 1032–cysteine 1050, and cysteine 1044–cysteine 1059. N-linked (GlcNAc...) asparagine glycosylation occurs at asparagine 1063. 7 LDL-receptor class A domains span residues threonine 1065–proline 1102, threonine 1109–glutamine 1145, threonine 1149–valine 1185, asparagine 1187–proline 1224, methionine 1230–valine 1268, threonine 1271–proline 1307, and histidine 1312–asparagine 1350. Intrachain disulfides connect cysteine 1066-cysteine 1079, cysteine 1073-cysteine 1092, cysteine 1086-cysteine 1101, cysteine 1110-cysteine 1122, cysteine 1117-cysteine 1135, cysteine 1129-cysteine 1144, cysteine 1150-cysteine 1162, cysteine 1157-cysteine 1175, and cysteine 1169-cysteine 1184. The Ca(2+) site is built by tryptophan 1127, aspartate 1130, aspartate 1132, aspartate 1134, aspartate 1140, and glutamate 1141. Residue asparagine 1187 is glycosylated (N-linked (GlcNAc...) asparagine). Disulfide bonds link cysteine 1188-cysteine 1201, cysteine 1195-cysteine 1214, cysteine 1208-cysteine 1223, cysteine 1231-cysteine 1244, cysteine 1238-cysteine 1257, cysteine 1251-cysteine 1267, cysteine 1272-cysteine 1284, cysteine 1279-cysteine 1297, cysteine 1291-cysteine 1306, cysteine 1313-cysteine 1326, cysteine 1320-cysteine 1339, cysteine 1333-cysteine 1349, cysteine 1354-cysteine 1365, cysteine 1361-cysteine 1374, cysteine 1376-cysteine 1389, cysteine 1395-cysteine 1405, cysteine 1401-cysteine 1414, and cysteine 1416-cysteine 1429. The Ca(2+) site is built by tyrosine 1206, aspartate 1209, valine 1211, aspartate 1213, aspartate 1219, and glutamate 1220. N-linked (GlcNAc...) asparagine glycosylation is found at asparagine 1328 and asparagine 1341. The 41-residue stretch at asparagine 1350–glutamate 1390 folds into the EGF-like 1 domain. Asparagine 1384 carries an N-linked (GlcNAc...) asparagine glycan. The region spanning aspartate 1391 to lysine 1430 is the EGF-like 2; calcium-binding domain. Asparagine 1451, asparagine 1497, and asparagine 1551 each carry an N-linked (GlcNAc...) asparagine glycan. LDL-receptor class B repeat units follow at residues glycine 1479–glycine 1521, arginine 1522–methionine 1564, asparagine 1567–asparagine 1610, arginine 1611–serine 1655, and valine 1656–serine 1696. 3 N-linked (GlcNAc...) asparagine glycosylation sites follow: asparagine 1676, asparagine 1733, and asparagine 1811. 10 LDL-receptor class B repeats span residues glutamine 1791–serine 1833, arginine 1834–arginine 1883, glycine 1884–glutamate 1931, glutamine 1932–phenylalanine 1973, leucine 1974–arginine 2014, glycine 2108–alanine 2157, glycine 2158–histidine 2202, arginine 2203–threonine 2246, glycine 2247–serine 2290, and isoleucine 2291–histidine 2333. N-linked (GlcNAc...) asparagine glycans are attached at residues asparagine 2131, asparagine 2134, asparagine 2178, and asparagine 2225. Asparagine 2396 carries N-linked (GlcNAc...) asparagine glycosylation. LDL-receptor class B repeat units lie at residues asparagine 2432 to asparagine 2478, arginine 2479 to arginine 2519, glycine 2520 to threonine 2563, aspartate 2564 to tyrosine 2605, and isoleucine 2606 to threonine 2647. Residues asparagine 2488 and asparagine 2548 are each glycosylated (N-linked (GlcNAc...) asparagine). LDL-receptor class A domains are found at residues arginine 2700 to alanine 2738, threonine 2741 to leucine 2777, serine 2780 to proline 2819, threonine 2822 to alanine 2861, threonine 2864 to glycine 2902, serine 2907 to glutamate 2946, asparagine 2949 to threonine 2991, alanine 2994 to serine 3030, proline 3033 to histidine 3071, and threonine 3076 to glycine 3112. 18 disulfide bridges follow: cysteine 2701-cysteine 2713, cysteine 2708-cysteine 2726, cysteine 2720-cysteine 2737, cysteine 2742-cysteine 2754, cysteine 2749-cysteine 2767, cysteine 2761-cysteine 2776, cysteine 2781-cysteine 2794, cysteine 2789-cysteine 2807, cysteine 2801-cysteine 2818, cysteine 2823-cysteine 2836, cysteine 2830-cysteine 2849, cysteine 2843-cysteine 2860, cysteine 2865-cysteine 2878, cysteine 2872-cysteine 2891, cysteine 2885-cysteine 2901, cysteine 2908-cysteine 2920, cysteine 2915-cysteine 2933, and cysteine 2927-cysteine 2945. Asparagine 2782 carries N-linked (GlcNAc...) asparagine glycosylation. Asparagine 2810 carries an N-linked (GlcNAc...) asparagine glycan. A glycan (N-linked (GlcNAc...) asparagine) is linked at asparagine 2949. Intrachain disulfides connect cysteine 2950/cysteine 2967, cysteine 2957/cysteine 2980, cysteine 2974/cysteine 2990, cysteine 2995/cysteine 3007, cysteine 3002/cysteine 3020, cysteine 3014/cysteine 3029, cysteine 3034/cysteine 3046, cysteine 3041/cysteine 3059, cysteine 3053/cysteine 3070, cysteine 3077/cysteine 3089, cysteine 3084/cysteine 3102, cysteine 3096/cysteine 3111, cysteine 3116/cysteine 3128, cysteine 3124/cysteine 3137, cysteine 3139/cysteine 3152, cysteine 3158/cysteine 3169, cysteine 3165/cysteine 3178, and cysteine 3180/cysteine 3193. The N-linked (GlcNAc...) asparagine glycan is linked to asparagine 2989. One can recognise an EGF-like 3 domain in the interval glycine 3112 to valine 3153. The N-linked (GlcNAc...) asparagine glycan is linked to asparagine 3127. Residues aspartate 3154 to arginine 3194 form the EGF-like 4; calcium-binding domain. 4 N-linked (GlcNAc...) asparagine glycosylation sites follow: asparagine 3213, asparagine 3259, asparagine 3317, and asparagine 3357. LDL-receptor class B repeat units follow at residues glutamate 3241–serine 3283, arginine 3284–arginine 3326, glycine 3335–asparagine 3378, aspartate 3379–threonine 3421, and valine 3422–tyrosine 3462. Asparagine 3448 is a glycosylation site (N-linked (GlcNAc...) asparagine). 8 consecutive LDL-receptor class A domains span residues methionine 3513–proline 3551, phenylalanine 3554–glutamate 3592, arginine 3595–alanine 3633, threonine 3636–methionine 3674, asparagine 3679–glutamate 3717, proline 3720–valine 3757, glutamate 3760–glutamate 3796, and threonine 3799–proline 3835. 24 disulfide bridges follow: cysteine 3514–cysteine 3527, cysteine 3521–cysteine 3540, cysteine 3534–cysteine 3550, cysteine 3555–cysteine 3567, cysteine 3562–cysteine 3580, cysteine 3574–cysteine 3591, cysteine 3596–cysteine 3608, cysteine 3603–cysteine 3621, cysteine 3615–cysteine 3632, cysteine 3637–cysteine 3649, cysteine 3644–cysteine 3662, cysteine 3656–cysteine 3673, cysteine 3680–cysteine 3694, cysteine 3688–cysteine 3707, cysteine 3701–cysteine 3716, cysteine 3721–cysteine 3734, cysteine 3729–cysteine 3747, cysteine 3741–cysteine 3756, cysteine 3761–cysteine 3773, cysteine 3768–cysteine 3786, cysteine 3780–cysteine 3795, cysteine 3800–cysteine 3812, cysteine 3807–cysteine 3825, and cysteine 3819–cysteine 3834. Asparagine 3566 is a glycosylation site (N-linked (GlcNAc...) asparagine). Asparagine 3682 carries an N-linked (GlcNAc...) asparagine glycan. A glycan (N-linked (GlcNAc...) asparagine) is linked at asparagine 3840. LDL-receptor class A domains are found at residues tyrosine 3843 to phenylalanine 3881, proline 3884 to arginine 3923, and proline 3929 to asparagine 3965. 9 disulfides stabilise this stretch: cysteine 3844–cysteine 3856, cysteine 3851–cysteine 3869, cysteine 3863–cysteine 3880, cysteine 3885–cysteine 3898, cysteine 3893–cysteine 3911, cysteine 3905–cysteine 3922, cysteine 3930–cysteine 3942, cysteine 3937–cysteine 3955, and cysteine 3949–cysteine 3964. N-linked (GlcNAc...) asparagine glycosylation is found at asparagine 3969 and asparagine 3980. Residues aspartate 4009–alanine 4050 form the EGF-like 5; calcium-binding domain. Cystine bridges form between cysteine 4013-cysteine 4023, cysteine 4019-cysteine 4032, and cysteine 4034-cysteine 4049. Asparagine 4070 carries N-linked (GlcNAc...) asparagine glycosylation. LDL-receptor class B repeat units lie at residues arginine 4156 to leucine 4198, glycine 4199 to asparagine 4242, and aspartate 4244 to glutamine 4285. Asparagine 4329 carries N-linked (GlcNAc...) asparagine glycosylation. Residues methionine 4379–glutamate 4413 form the EGF-like 6 domain. 3 disulfides stabilise this stretch: cysteine 4383/cysteine 4391, cysteine 4385/cysteine 4401, and cysteine 4403/cysteine 4412. Residues methionine 4426–phenylalanine 4446 form a helical membrane-spanning segment. At phenylalanine 4447–valine 4660 the chain is on the cytoplasmic side. An SH3-binding motif is present at residues serine 4454–proline 4463. Residues proline 4457–leucine 4462 carry the PxLPxI/L motif 1; mediates interaction with ANKRA2 motif. The short motif at proline 4460–leucine 4465 is the PxLPxI/L motif 2; mediates interaction with ANKRA2 element. Serine 4464 and serine 4467 each carry phosphoserine. The Endocytosis signal signature appears at phenylalanine 4522–tyrosine 4527. The interval glutamine 4558–valine 4660 is disordered. Serine 4577 carries the post-translational modification Phosphoserine. The tract at residues glutamine 4597–aspartate 4610 is interaction with DAB2. Residues asparagine 4603–tyrosine 4606 carry the NPXY motif motif. An SH2-binding motif is present at residues tyrosine 4606–methionine 4609. Positions valine 4619 to lysine 4630 match the SH3-binding motif. The residue at position 4624 (serine 4624) is a Phosphoserine. Over residues leucine 4627–serine 4636 the composition is skewed to low complexity. Threonine 4637 carries the post-translational modification Phosphothreonine. Serine 4658 is modified (phosphoserine).

This sequence belongs to the LDLR family. Binds plasminogen, extracellular matrix components, plasminogen activator-plasminogen activator inhibitor type I complex, apolipoprotein E-enriched beta-VLDL, lipoprotein lipase, lactoferrin, CLU/clusterin and calcium. Forms a multimeric complex together with LRPAP1. Interacts (via PxLPxI/L motif) with ANKRA2 (via ankyrin repeats). Interacts with LRP2BP. Interacts (via NPXY motif) with DAB2; the interaction is not affected by tyrosine phosphorylation of the NPXY motif. Interacts with MB. Interacts with BMP4. Interacts with the Sonic hedgehog protein N-product which is the active product of SHH. Interacts with CST3 in a calcium-dependent manner. Interacts with the vitamin-D binding protein GC/DBP. Interacts with sex hormone-binding protein SHBG. Interacts with angiotensin-2. Also interacts with angiotensin 1-7. Interacts with APOM. Interacts with selenoprotein SEPP1. Interacts with LEP. Interacts with ALB. Interacts with the antiapoptotic protein BIRC5/survivin. Interacts with matrix metalloproteinase MMP2 in complex with metalloproteinase inhibitor TIMP1. In neurons, forms a trimeric complex with APP and APPB1/FE65. Interacts with LDLRAP1/ARH; mediates trafficking of LRP2 to the endocytic recycling compartment. Does not interact with beta-amyloid protein 40 alone but interacts with the complex composed of beta-amyloid protein 40 and CLU/APOJ. Interacts with MDK. In terms of processing, a fraction undergoes proteolytic cleavage of the extracellular domain at the cell membrane to generate a cytoplasmic tail fragment. This is internalized into the early endosome from where it trafficks in an LDLRAP1/ARH-dependent manner to the endocytic recycling compartment (ERC). In the ERC, it is further cleaved by gamma-secretase to release a fragment which translocates to the nucleus and mediates transcriptional repression. N-glycosylation is required for ligand binding. Contains core-fucosylated N-glycans in kidney proximal convoluted tubules (PCTs) and hybrid-type N-glycans in proximal straight tubules (PSTs). Interacts with ligands in a glycoform-dependent manner. Retinol-binding protein and the vitamin D carrier GC/DBP are endocytosed primarily by PCTs, albumin is endocytosed equally by PCTs and PSTs, and the aminoglycoside kanamycin is endocytosed primarily by PSTs. As to expression, in the inner ear, strongly expressed in the marginal cells of the stria vascularis (at protein level). In the female reproductive tract, expressed on the luminal side of the uterine epithelium (at protein level). In the adult brain, expressed in ependymal cells of the lateral ventricles where expression is restricted to the ependyma that faces the stem cell niche (at protein level). Expressed in neurons throughout the brain including in the hippocampus, limbic cortices and cerebellum (at protein level). In the developing optic nerve, expressed exclusively in astrocytes at 14.5 dpc, 16.5 dpc and 18.5 dpc (at protein level).

It is found in the apical cell membrane. Its subcellular location is the endosome lumen. The protein localises to the membrane. It localises to the coated pit. The protein resides in the cell projection. It is found in the dendrite. Its subcellular location is the axon. Its function is as follows. Multiligand endocytic receptor. Acts together with CUBN to mediate endocytosis of high-density lipoproteins. Mediates receptor-mediated uptake of polybasic drugs such as aprotinin, aminoglycosides and polymyxin B. In the kidney, mediates the tubular uptake and clearance of leptin. Also mediates transport of leptin across the blood-brain barrier through endocytosis at the choroid plexus epithelium. Endocytosis of leptin in neuronal cells is required for hypothalamic leptin signaling and leptin-mediated regulation of feeding and body weight. Mediates endocytosis and subsequent lysosomal degradation of CST3 in kidney proximal tubule cells. Mediates renal uptake of 25-hydroxyvitamin D3 in complex with the vitamin D3 transporter GC/DBP. Mediates renal uptake of metallothionein-bound heavy metals. Together with CUBN, mediates renal reabsorption of myoglobin. Mediates renal uptake and subsequent lysosomal degradation of APOM. Plays a role in kidney selenium homeostasis by mediating renal endocytosis of selenoprotein SEPP1. Mediates renal uptake of the antiapoptotic protein BIRC5/survivin which may be important for functional integrity of the kidney. Mediates renal uptake of matrix metalloproteinase MMP2 in complex with metalloproteinase inhibitor TIMP1. Mediates endocytosis of Sonic hedgehog protein N-product (ShhN), the active product of SHH. Also mediates ShhN transcytosis. In the embryonic neuroepithelium, mediates endocytic uptake and degradation of BMP4, is required for correct SHH localization in the ventral neural tube and plays a role in patterning of the ventral telencephalon. Required at the onset of neurulation to sequester SHH on the apical surface of neuroepithelial cells of the rostral diencephalon ventral midline and to control PTCH1-dependent uptake and intracellular trafficking of SHH. During neurulation, required in neuroepithelial cells for uptake of folate bound to the folate receptor FOLR1 which is necessary for neural tube closure. In the adult brain, negatively regulates BMP signaling in the subependymal zone which enables neurogenesis to proceed. In astrocytes, mediates endocytosis of ALB which is required for the synthesis of the neurotrophic factor oleic acid. Involved in neurite branching. During optic nerve development, required for SHH-mediated migration and proliferation of oligodendrocyte precursor cells. Mediates endocytic uptake and clearance of SHH in the retinal margin which protects retinal progenitor cells from mitogenic stimuli and keeps them quiescent. Plays a role in reproductive organ development by mediating uptake in reproductive tissues of androgen and estrogen bound to the sex hormone binding protein SHBG. Mediates endocytosis of angiotensin-2. Also mediates endocytosis of angiotensin 1-7. Binds to the complex composed of beta-amyloid protein 40 and CLU/APOJ and mediates its endocytosis and lysosomal degradation. Required for embryonic heart development. Required for normal hearing, possibly through interaction with estrogen in the inner ear. In Mus musculus (Mouse), this protein is Low-density lipoprotein receptor-related protein 2 (Lrp2).